A 205-amino-acid polypeptide reads, in one-letter code: LexA repressor (205 aa).

Residues 29 to 49 constitute a DNA-binding region (H-T-H motif); it reads IRDICKATGLRSSSTVYNYLN. Catalysis depends on for autocatalytic cleavage activity residues S128 and K165.

It belongs to the peptidase S24 family. As to quaternary structure, homodimer.

It catalyses the reaction Hydrolysis of Ala-|-Gly bond in repressor LexA.. Functionally, represses a number of genes involved in the response to DNA damage (SOS response), including recA and lexA. In the presence of single-stranded DNA, RecA interacts with LexA causing an autocatalytic cleavage which disrupts the DNA-binding part of LexA, leading to derepression of the SOS regulon and eventually DNA repair. The polypeptide is LexA repressor (Moorella thermoacetica (strain ATCC 39073 / JCM 9320)).